Here is an 814-residue protein sequence, read N- to C-terminus: Acyl-coenzyme A dehydrogenase (814 aa).

The active-site Proton acceptor is the E497.

The protein belongs to the acyl-CoA dehydrogenase family. Requires FAD as cofactor.

It carries out the reaction a medium-chain 2,3-saturated fatty acyl-CoA + oxidized [electron-transfer flavoprotein] + H(+) = a medium-chain (2E)-enoyl-CoA + reduced [electron-transfer flavoprotein]. The catalysed reaction is a long-chain 2,3-saturated fatty acyl-CoA + oxidized [electron-transfer flavoprotein] + H(+) = a long-chain (2E)-enoyl-CoA + reduced [electron-transfer flavoprotein]. The protein operates within lipid metabolism; fatty acid beta-oxidation. Catalyzes the dehydrogenation of acyl-coenzymes A (acyl-CoAs) to 2-enoyl-CoAs, the first step of the beta-oxidation cycle of fatty acid degradation. Is required for the utilization of medium- and long-chain fatty acids as sole carbon sources for growth. In Escherichia coli O157:H7, this protein is Acyl-coenzyme A dehydrogenase (fadE).